The following is a 352-amino-acid chain: Ion-translocating oxidoreductase complex subunit D (352 aa).

Helical transmembrane passes span 20–40, 44–64, 78–109, and 123–143; these read IMLLVLIAALPGVAAQTWFFG, LFQIVLAAVTALFAEAIVLSL, ALLTGLLLAVSIPPLAPWWMIVLGTGFAIIIA, and PAMIGYVVLLISFPVQMTSWL. Thr-187 carries the post-translational modification FMN phosphoryl threonine. The next 5 helical transmembrane spans lie at 214-234, 242-262, 267-287, 301-321, and 322-342; these read VLAGVGWQWVNLAWLVGGVFL, WHIPVSFLVTLALCATLGWLF, LASPQLHLLSGATMLGAFFIL, LIFGALAGVLVWLIRSFGGYP, and DGVAFAVLLANITVPLIDYYT.

Belongs to the NqrB/RnfD family. In terms of assembly, the complex is composed of six subunits: RsxA, RsxB, RsxC, RsxD, RsxE and RsxG. FMN is required as a cofactor.

Its subcellular location is the cell inner membrane. In terms of biological role, part of a membrane-bound complex that couples electron transfer with translocation of ions across the membrane. Required to maintain the reduced state of SoxR. In Salmonella arizonae (strain ATCC BAA-731 / CDC346-86 / RSK2980), this protein is Ion-translocating oxidoreductase complex subunit D.